The following is a 120-amino-acid chain: SPbeta prophage-derived DSR anti-defense 1 (120 aa).

The protein belongs to the DSR anti-defense 1 family. As to quaternary structure, interacts with Bacillus subtilis DSR2 (via C-terminus) in a 2:4 ratio; this interaction leads to the absence of activation of the NADase defense activity of DSR2.

Counteracts the defense-associated sirtuin 2 (DSR2) defense system of the host. Inhibits the NADase activity of host DSR2 by competing with the tail tube protein that normally activates DSR2. This is SPbeta prophage-derived DSR anti-defense 1 (yotI) from Bacillus subtilis (strain 168).